The primary structure comprises 389 residues: Chitin-binding protein CbpD (389 aa).

The first 25 residues, 1-25, serve as a signal peptide directing secretion; it reads MKHYSATLALLPLTLALFLPQAAHA. The region spanning 26–208 is the Chitin-binding type-4 domain; sequence HGSMETPPSR…EAFYACIDVS (183 aa). Tyrosine 37 carries the phosphotyrosine modification. Serine 210 carries the post-translational modification Phosphoserine.

It localises to the secreted. Its function is as follows. Binds but does not hydrolyze chitin. In Pseudomonas aeruginosa (strain UCBPP-PA14), this protein is Chitin-binding protein CbpD (cpbD).